Reading from the N-terminus, the 252-residue chain is Trans-aconitate 2-methyltransferase (252 aa).

This sequence belongs to the methyltransferase superfamily. Tam family.

It is found in the cytoplasm. It catalyses the reaction trans-aconitate + S-adenosyl-L-methionine = (E)-3-(methoxycarbonyl)pent-2-enedioate + S-adenosyl-L-homocysteine. Its function is as follows. Catalyzes the S-adenosylmethionine monomethyl esterification of trans-aconitate. The chain is Trans-aconitate 2-methyltransferase from Shigella dysenteriae serotype 1 (strain Sd197).